The primary structure comprises 230 residues: Dephospho-CoA kinase (230 aa).

Residues 1 to 21 (MSKYAAAPSPYSHQPQTPEHK) form a disordered region. Residues 26–225 (VVGLTGGIGS…QDYLKLAQQL (200 aa)) enclose the DPCK domain. 34–39 (GSGKSA) contacts ATP.

It belongs to the CoaE family.

It localises to the cytoplasm. It catalyses the reaction 3'-dephospho-CoA + ATP = ADP + CoA + H(+). It functions in the pathway cofactor biosynthesis; coenzyme A biosynthesis; CoA from (R)-pantothenate: step 5/5. Functionally, catalyzes the phosphorylation of the 3'-hydroxyl group of dephosphocoenzyme A to form coenzyme A. In Psychrobacter cryohalolentis (strain ATCC BAA-1226 / DSM 17306 / VKM B-2378 / K5), this protein is Dephospho-CoA kinase.